We begin with the raw amino-acid sequence, 324 residues long: Biotin synthase 1 (324 aa).

The Radical SAM core domain occupies 37–256; sequence NAIETASLLS…VALARILMPA (220 aa). Residues cysteine 52, cysteine 56, and cysteine 59 each coordinate [4Fe-4S] cluster. Positions 96, 127, 187, and 260 each coordinate [2Fe-2S] cluster.

The protein belongs to the radical SAM superfamily. Biotin synthase family. Homodimer. It depends on [4Fe-4S] cluster as a cofactor. Requires [2Fe-2S] cluster as cofactor.

It carries out the reaction (4R,5S)-dethiobiotin + (sulfur carrier)-SH + 2 reduced [2Fe-2S]-[ferredoxin] + 2 S-adenosyl-L-methionine = (sulfur carrier)-H + biotin + 2 5'-deoxyadenosine + 2 L-methionine + 2 oxidized [2Fe-2S]-[ferredoxin]. Its pathway is cofactor biosynthesis; biotin biosynthesis; biotin from 7,8-diaminononanoate: step 2/2. Catalyzes the conversion of dethiobiotin (DTB) to biotin by the insertion of a sulfur atom into dethiobiotin via a radical-based mechanism. This is Biotin synthase 1 from Paracoccus denitrificans (strain Pd 1222).